The chain runs to 76 residues: Exodeoxyribonuclease 7 small subunit (76 aa).

The protein belongs to the XseB family. In terms of assembly, heterooligomer composed of large and small subunits.

The protein resides in the cytoplasm. The enzyme catalyses Exonucleolytic cleavage in either 5'- to 3'- or 3'- to 5'-direction to yield nucleoside 5'-phosphates.. Its function is as follows. Bidirectionally degrades single-stranded DNA into large acid-insoluble oligonucleotides, which are then degraded further into small acid-soluble oligonucleotides. This chain is Exodeoxyribonuclease 7 small subunit, found in Methylococcus capsulatus (strain ATCC 33009 / NCIMB 11132 / Bath).